A 554-amino-acid chain; its full sequence is Rab GTPase-binding effector protein 2 (554 aa).

The segment covering 1-15 (MAAAPAALALDPQPQ) has biased composition (low complexity). 3 disordered regions span residues 1 to 29 (MAAA…ELSR), 167 to 250 (IQRR…ETAS), and 375 to 395 (EQLP…DEAL). Residues 15–173 (QEEQKDASES…IQEIQRRPRQ (159 aa)) adopt a coiled-coil conformation. Basic and acidic residues predominate over residues 16–29 (EEQKDASESSELSR). Phosphoserine is present on residues Ser176, Ser180, Ser187, and Ser191. Residues 274–512 (DSQWEQLQVE…LETSEQVQRD (239 aa)) adopt a coiled-coil conformation. Polar residues predominate over residues 377–386 (LPSSALQGSE).

It belongs to the rabaptin family. As to quaternary structure, heterodimer with RABGEF1. The dimer binds RAB5A that has been activated by GTP-binding. Interacts with SDCCAG8; this interaction is important for ciliogenesis regulation. Interacts with RAB4A; this interaction may mediate VEGFR2 cell surface expression.

The protein localises to the cytoplasm. Its subcellular location is the early endosome. It is found in the cytoskeleton. The protein resides in the microtubule organizing center. It localises to the centrosome. The protein localises to the cilium basal body. Its function is as follows. Plays a role in membrane trafficking and in homotypic early endosome fusion. Participates in arteriogenesis by regulating vascular endothelial growth factor receptor 2/VEGFR2 cell surface expression and endosomal trafficking. By interacting with SDCCAG8, localizes to centrosomes and plays a critical role in ciliogenesis. The protein is Rab GTPase-binding effector protein 2 (Rabep2) of Rattus norvegicus (Rat).